Reading from the N-terminus, the 292-residue chain is tRNA pseudouridine synthase B (292 aa).

The Nucleophile role is filled by Asp-38.

The protein belongs to the pseudouridine synthase TruB family. Type 1 subfamily.

It carries out the reaction uridine(55) in tRNA = pseudouridine(55) in tRNA. Functionally, responsible for synthesis of pseudouridine from uracil-55 in the psi GC loop of transfer RNAs. The polypeptide is tRNA pseudouridine synthase B (Streptococcus pneumoniae serotype 4 (strain ATCC BAA-334 / TIGR4)).